We begin with the raw amino-acid sequence, 62 residues long: Alpha-toxin Tf4 (62 aa).

One can recognise an LCN-type CS-alpha/beta domain in the interval 2 to 62; that stretch reads KEGYPADSKG…SVWDSATNKC (61 aa). Disulfide bonds link Cys-12–Cys-62, Cys-16–Cys-38, Cys-24–Cys-43, and Cys-28–Cys-45. A Cysteine amide modification is found at Cys-62.

Expressed by the venom gland.

The protein localises to the secreted. In terms of biological role, alpha toxins bind voltage-independently at site-3 of sodium channels (Nav) and inhibit the inactivation of the activated channels, thereby blocking neuronal transmission. This toxin is toxic to frogs but non-toxic to insect larvae (T.molitor), mammals (rats) and crustaceans (crabs) at the doses assayed. The polypeptide is Alpha-toxin Tf4 (Tityus fasciolatus (Central Brazilian scorpion)).